The chain runs to 473 residues: Spliceosome-associated protein CWC27 homolog (473 aa).

Serine 2 is modified (N-acetylserine). Residues 11–166 form the PPIase cyclophilin-type domain; that stretch reads TNGKVLLKTT…NPHKIKSCEV (156 aa). Residues 177-193 show a composition bias toward basic and acidic residues; that stretch reads REIKRPKKEKPEEEVKK. Disordered regions lie at residues 177–386 and 399–473; these read REIK…EDQT and QAIA…KERR. Positions 206 to 230 form a coiled coil; that stretch reads SFGEEAEEEEEEVNRVSQSMKGKSK. The segment covering 231–241 has biased composition (basic and acidic residues); sequence SSHDLLKDDPH. The span at 257–275 shows a compositional bias: acidic residues; it reads GDLDDDGEDESAEYDEYVD. Composition is skewed to basic and acidic residues over residues 276-287, 305-348, and 360-372; these read GDEKNLMRERIA, EVEK…KRSE, and EYRR…EALR. Residues 307-378 are a coiled coil; it reads EKKSVSRSEE…EALRKQQSKK (72 aa). Serine 347 bears the Phosphoserine mark. Residues 405–419 are compositionally biased toward acidic residues; the sequence is PENDIPETEVEDDEG. Basic and acidic residues-rich tracts occupy residues 426–438 and 458–473; these read QFED…KDAS and RREE…KERR.

Belongs to the cyclophilin-type PPIase family. In terms of assembly, part of the activated spliceosome B/catalytic step 1 spliceosome, one of the forms of the spliceosome which has a well-formed active site but still cannot catalyze the branching reaction and is composed at least of 52 proteins, the U2, U5 and U6 snRNAs and the pre-mRNA. Recruited during early steps of activated spliceosome B maturation, it is probably one of the first proteins released from this complex as he matures to the spliceosome C complex. Component of the minor spliceosome, which splices U12-type introns.

The protein localises to the nucleus. In terms of biological role, as part of the spliceosome, plays a role in pre-mRNA splicing. Probable inactive PPIase with no peptidyl-prolyl cis-trans isomerase activity. As a component of the minor spliceosome, involved in the splicing of U12-type introns in pre-mRNAs. In Macaca fascicularis (Crab-eating macaque), this protein is Spliceosome-associated protein CWC27 homolog.